Here is a 321-residue protein sequence, read N- to C-terminus: Glucokinase (321 aa).

8 to 13 (GDVGGT) is a binding site for ATP.

The protein belongs to the bacterial glucokinase family.

The protein localises to the cytoplasm. The catalysed reaction is D-glucose + ATP = D-glucose 6-phosphate + ADP + H(+). This Escherichia coli O127:H6 (strain E2348/69 / EPEC) protein is Glucokinase.